The primary structure comprises 124 residues: Small ribosomal subunit protein uS12 (124 aa).

At aspartate 89 the chain carries 3-methylthioaspartic acid.

The protein belongs to the universal ribosomal protein uS12 family. Part of the 30S ribosomal subunit. Contacts proteins S8 and S17. May interact with IF1 in the 30S initiation complex.

Functionally, with S4 and S5 plays an important role in translational accuracy. Its function is as follows. Interacts with and stabilizes bases of the 16S rRNA that are involved in tRNA selection in the A site and with the mRNA backbone. Located at the interface of the 30S and 50S subunits, it traverses the body of the 30S subunit contacting proteins on the other side and probably holding the rRNA structure together. The combined cluster of proteins S8, S12 and S17 appears to hold together the shoulder and platform of the 30S subunit. The sequence is that of Small ribosomal subunit protein uS12 from Prochlorococcus marinus (strain SARG / CCMP1375 / SS120).